Consider the following 37-residue polypeptide: Large ribosomal subunit protein bL36 (37 aa).

Belongs to the bacterial ribosomal protein bL36 family.

This chain is Large ribosomal subunit protein bL36, found in Bordetella bronchiseptica (strain ATCC BAA-588 / NCTC 13252 / RB50) (Alcaligenes bronchisepticus).